Here is a 169-residue protein sequence, read N- to C-terminus: Ubiquitin-fold modifier-conjugating enzyme 1 (169 aa).

C116 acts as the Glycyl thioester intermediate in catalysis.

Belongs to the ubiquitin-conjugating enzyme family. UFC1 subfamily.

Its function is as follows. E2-like enzyme which forms an intermediate with UFM1 via a thioester linkage. This Branchiostoma floridae (Florida lancelet) protein is Ubiquitin-fold modifier-conjugating enzyme 1.